The primary structure comprises 478 residues: Sulfate adenylyltransferase subunit 1 (478 aa).

The tr-type G domain maps to 28 to 244; the sequence is KTMLRFLTCG…LESVDVVNAS (217 aa). A G1 region spans residues 37-44; that stretch reads GSVDDGKS. 37–44 provides a ligand contact to GTP; it reads GSVDDGKS. A G2 region spans residues 95-99; it reads GITID. The G3 stretch occupies residues 116 to 119; sequence DTPG. GTP-binding positions include 116–120 and 171–174; these read DTPGH and NKMD. Residues 171–174 are G4; that stretch reads NKMD. A G5 region spans residues 209 to 211; the sequence is SAL.

The protein belongs to the TRAFAC class translation factor GTPase superfamily. Classic translation factor GTPase family. CysN/NodQ subfamily. Heterodimer composed of CysD, the smaller subunit, and CysN.

It carries out the reaction sulfate + ATP + H(+) = adenosine 5'-phosphosulfate + diphosphate. Its pathway is sulfur metabolism; hydrogen sulfide biosynthesis; sulfite from sulfate: step 1/3. Functionally, with CysD forms the ATP sulfurylase (ATPS) that catalyzes the adenylation of sulfate producing adenosine 5'-phosphosulfate (APS) and diphosphate, the first enzymatic step in sulfur assimilation pathway. APS synthesis involves the formation of a high-energy phosphoric-sulfuric acid anhydride bond driven by GTP hydrolysis by CysN coupled to ATP hydrolysis by CysD. The polypeptide is Sulfate adenylyltransferase subunit 1 (Yersinia enterocolitica serotype O:8 / biotype 1B (strain NCTC 13174 / 8081)).